The sequence spans 157 residues: Transcription elongation factor GreA (157 aa).

Positions 1–24 (MDKFPMTPEGYHALDEELKRRQQE) are disordered. The segment covering 12–24 (HALDEELKRRQQE) has biased composition (basic and acidic residues). Positions 53–73 (EAQSLNEGRIAELEDKLSRAE) form a coiled coil.

Belongs to the GreA/GreB family.

In terms of biological role, necessary for efficient RNA polymerase transcription elongation past template-encoded arresting sites. The arresting sites in DNA have the property of trapping a certain fraction of elongating RNA polymerases that pass through, resulting in locked ternary complexes. Cleavage of the nascent transcript by cleavage factors such as GreA or GreB allows the resumption of elongation from the new 3'terminus. GreA releases sequences of 2 to 3 nucleotides. The polypeptide is Transcription elongation factor GreA (Beijerinckia indica subsp. indica (strain ATCC 9039 / DSM 1715 / NCIMB 8712)).